We begin with the raw amino-acid sequence, 285 residues long: Meiotically up-regulated gene 74 protein (285 aa).

It localises to the cytoplasm. Functionally, has a role in meiosis. In Schizosaccharomyces pombe (strain 972 / ATCC 24843) (Fission yeast), this protein is Meiotically up-regulated gene 74 protein (mug74).